A 206-amino-acid chain; its full sequence is Large ribosomal subunit protein uL4 (206 aa).

Residues 51–96 form a disordered region; sequence LTRAEVKHSTKKPFRQKGTGNARAGMTSTPNRRGGGRAFPNKPDEN.

This sequence belongs to the universal ribosomal protein uL4 family. As to quaternary structure, part of the 50S ribosomal subunit.

In terms of biological role, one of the primary rRNA binding proteins, this protein initially binds near the 5'-end of the 23S rRNA. It is important during the early stages of 50S assembly. It makes multiple contacts with different domains of the 23S rRNA in the assembled 50S subunit and ribosome. Forms part of the polypeptide exit tunnel. This is Large ribosomal subunit protein uL4 from Chromobacterium violaceum (strain ATCC 12472 / DSM 30191 / JCM 1249 / CCUG 213 / NBRC 12614 / NCIMB 9131 / NCTC 9757 / MK).